Consider the following 297-residue polypeptide: 4-hydroxy-tetrahydrodipicolinate synthase (297 aa).

Threonine 46 contacts pyruvate. Residue tyrosine 134 is the Proton donor/acceptor of the active site. Lysine 162 acts as the Schiff-base intermediate with substrate in catalysis. Position 209 (isoleucine 209) interacts with pyruvate.

Belongs to the DapA family. In terms of assembly, homotetramer; dimer of dimers.

Its subcellular location is the cytoplasm. It carries out the reaction L-aspartate 4-semialdehyde + pyruvate = (2S,4S)-4-hydroxy-2,3,4,5-tetrahydrodipicolinate + H2O + H(+). The protein operates within amino-acid biosynthesis; L-lysine biosynthesis via DAP pathway; (S)-tetrahydrodipicolinate from L-aspartate: step 3/4. Functionally, catalyzes the condensation of (S)-aspartate-beta-semialdehyde [(S)-ASA] and pyruvate to 4-hydroxy-tetrahydrodipicolinate (HTPA). In Methanosphaera stadtmanae (strain ATCC 43021 / DSM 3091 / JCM 11832 / MCB-3), this protein is 4-hydroxy-tetrahydrodipicolinate synthase.